The following is a 255-amino-acid chain: Triosephosphate isomerase (255 aa).

Residue 9–11 (NWK) participates in substrate binding. The Electrophile role is filled by His-100. The active-site Proton acceptor is Glu-169. Residues Gly-175, Ser-208, and 229-230 (GG) contribute to the substrate site.

It belongs to the triosephosphate isomerase family. Homodimer.

The protein localises to the cytoplasm. The catalysed reaction is D-glyceraldehyde 3-phosphate = dihydroxyacetone phosphate. The protein operates within carbohydrate biosynthesis; gluconeogenesis. It functions in the pathway carbohydrate degradation; glycolysis; D-glyceraldehyde 3-phosphate from glycerone phosphate: step 1/1. Its function is as follows. Involved in the gluconeogenesis. Catalyzes stereospecifically the conversion of dihydroxyacetone phosphate (DHAP) to D-glyceraldehyde-3-phosphate (G3P). The chain is Triosephosphate isomerase from Synechococcus sp. (strain JA-3-3Ab) (Cyanobacteria bacterium Yellowstone A-Prime).